We begin with the raw amino-acid sequence, 86 residues long: Large ribosomal subunit protein bL31B (86 aa).

It belongs to the bacterial ribosomal protein bL31 family. Type B subfamily. Part of the 50S ribosomal subunit.

This is Large ribosomal subunit protein bL31B from Ralstonia pickettii (strain 12J).